The primary structure comprises 413 residues: Divalent metal cation transporter MntH (413 aa).

Residues Met-1–Leu-19 are Cytoplasmic-facing. The chain crosses the membrane as a helical span at residues Ala-20–Ala-39. Topologically, residues Thr-40–Gln-51 are periplasmic. The helical transmembrane segment at Leu-52–Ala-71 threads the bilayer. At Lys-72–Trp-95 the chain is on the cytoplasmic side. Residues Phe-96 to Ile-118 form a helical membrane-spanning segment. The Periplasmic segment spans residues Gly-119–Gly-125. The helical transmembrane segment at Val-126–Leu-145 threads the bilayer. Topologically, residues Gln-146–Lys-155 are cytoplasmic. A helical transmembrane segment spans residues Val-156–Ser-175. At Gln-176–Ala-196 the chain is on the periplasmic side. Residues Val-197 to Thr-220 form a helical membrane-spanning segment. Residues Gln-221–Asp-238 are Cytoplasmic-facing. Residues Val-239 to Ala-258 traverse the membrane as a helical segment. Residues Ala-259 to Tyr-276 lie on the Periplasmic side of the membrane. Residues Leu-277–Ala-297 traverse the membrane as a helical segment. The Cytoplasmic segment spans residues Ala-298–Arg-327. Residues Arg-328–Asp-344 traverse the membrane as a helical segment. Over Pro-345 to Val-350 the chain is Periplasmic. A helical membrane pass occupies residues Met-351 to Phe-370. Residues Thr-371 to Lys-387 are Cytoplasmic-facing. The helical transmembrane segment at Gln-388 to Val-406 threads the bilayer. Topologically, residues Gly-407–Ser-413 are periplasmic.

It belongs to the NRAMP family.

Its subcellular location is the cell inner membrane. H(+)-stimulated, divalent metal cation uptake system. The chain is Divalent metal cation transporter MntH from Salmonella schwarzengrund (strain CVM19633).